The following is a 311-amino-acid chain: MSSIRRRHAAASLDTPAVGGRHELGQNFLVDRGVCTRIAEVVSSTTAHPVLELGAGDGAITRALVAANLPVTALELDPRRVRRLQRTFADGVTVVHGDMLRYDFGPYPHHVVSTVPFSITTPLLRRLIGQRFWHTAVLLVQWEVARKRAGVGGTTMLTAASWPWYEFTLVERVPKTSFDPVPSVDGGILVIERRSAPLLDDRCVGDYQNLVREVYTGPGRGLAAILRTRLPGREVDAWLRRERVDPAALPRDLKAGHWASLYRLYREVGTRPAPAGRSVRARPGSVGPDRSLPPRGLRSGPPRARRRGGGA.

Asn27, Leu29, Gly54, Glu75, and Asp98 together coordinate S-adenosyl-L-methionine. Positions 272 to 311 (PAPAGRSVRARPGSVGPDRSLPPRGLRSGPPRARRRGGGA) are disordered. Low complexity predominate over residues 293-302 (PPRGLRSGPP).

The protein belongs to the class I-like SAM-binding methyltransferase superfamily. rRNA adenine N(6)-methyltransferase family.

In terms of biological role, confers resistance to macrolide, lincosamide and streptogramin B antibiotics. In Micromonospora griseorubida, this protein is Mycinamicin-resistance protein MyrB (myrB).